A 456-amino-acid polypeptide reads, in one-letter code: MSLSVRTSALSRRSSSQNGVAGRPWGASASSVACGYGGTASGFGVGCGGLLSAASMFGSSSGFSGGSTGCSPGLGTAYGGPLGAGVGGMGIGGSSGGGSLCIFSGNDGGLLSGSEKETMQNLNDRLASYLGKVRALEEANAELENKIREWYETRRTGDSGSQSDYSKYYPLIEDLKNKIISASVSNAQLLLQIDNARLAAEDFRMKYENELALRQTVEADINGLRRVLDELTLARADLEAQTENLTEELAYMKKNHEEELQSFQAGGPGEVNVEMDAAPGVDLTKSGELRKEINSNTEQLQSSKSEVTDLKRMVQNLEIELQSQLAMKSSLEGSLAETEGGYCCQLSQMQQLIGSLEEQLQQLRADAERQNEDHQRLLGVKARLEMEIETYRRLLEGDTQGDGFDESLSLTVSKPQAPSVDSSKDPNKTRKIKTVVQEIVNGEVVSSQVQELEEAM.

Residues 1 to 19 show a composition bias toward polar residues; that stretch reads MSLSVRTSALSRRSSSQNG. The interval 1 to 25 is disordered; sequence MSLSVRTSALSRRSSSQNGVAGRPW. The tract at residues 1–114 is head; sequence MSLSVRTSAL…GNDGGLLSGS (114 aa). The tract at residues 115 to 150 is coil 1A; it reads EKETMQNLNDRLASYLGKVRALEEANAELENKIREW. One can recognise an IF rod domain in the interval 115-402; the sequence is EKETMQNLND…RLLEGDTQGD (288 aa). The linker 1 stretch occupies residues 154-171; it reads RRTGDSGSQSDYSKYYPL. The coil 1B stretch occupies residues 172 to 263; that stretch reads IEDLKNKIIS…KNHEEELQSF (92 aa). Residues 264–286 form a linker 12 region; that stretch reads QAGGPGEVNVEMDAAPGVDLTKS. Residues 287-397 are coil 2; sequence GELRKEINSN…IETYRRLLEG (111 aa). The tract at residues 398–456 is tail; sequence DTQGDGFDESLSLTVSKPQAPSVDSSKDPNKTRKIKTVVQEIVNGEVVSSQVQELEEAM. Positions 405-430 are disordered; the sequence is DESLSLTVSKPQAPSVDSSKDPNKTR. Polar residues predominate over residues 408–421; it reads LSLTVSKPQAPSVD.

Belongs to the intermediate filament family. Heterotetramer of two type I and two type II keratins. Keratin-3 associates with keratin-12.

Functionally, involved in corneal epithelium organization, integrity and corneal keratin expression. This is Keratin, type I cytoskeletal 12 from Rattus norvegicus (Rat).